The primary structure comprises 215 residues: Octanoyltransferase (215 aa).

The region spanning 31–206 is the BPL/LPL catalytic domain; it reads TSAEDEIWLV…QLVKHLDYAE (176 aa). Substrate contacts are provided by residues 70-77, 137-139, and 150-152; these read RGGQVTYH, SLG, and GLA. Cys-168 functions as the Acyl-thioester intermediate in the catalytic mechanism.

It belongs to the LipB family.

The protein localises to the cytoplasm. The enzyme catalyses octanoyl-[ACP] + L-lysyl-[protein] = N(6)-octanoyl-L-lysyl-[protein] + holo-[ACP] + H(+). The protein operates within protein modification; protein lipoylation via endogenous pathway; protein N(6)-(lipoyl)lysine from octanoyl-[acyl-carrier-protein]: step 1/2. In terms of biological role, catalyzes the transfer of endogenously produced octanoic acid from octanoyl-acyl-carrier-protein onto the lipoyl domains of lipoate-dependent enzymes. Lipoyl-ACP can also act as a substrate although octanoyl-ACP is likely to be the physiological substrate. This chain is Octanoyltransferase, found in Pseudomonas fluorescens (strain SBW25).